The primary structure comprises 267 residues: Outer membrane protein assembly factor BamD (267 aa).

The N-terminal stretch at 1–16 (MKKILLTVSLGLALSA) is a signal peptide. Cysteine 17 is lipidated: N-palmitoyl cysteine. Residue cysteine 17 is the site of S-diacylglycerol cysteine attachment.

This sequence belongs to the BamD family. As to quaternary structure, part of the Bam complex.

It is found in the cell outer membrane. Its function is as follows. Part of the outer membrane protein assembly complex, which is involved in assembly and insertion of beta-barrel proteins into the outer membrane. Required for efficient transformation of Neisseria meningitidis by species-related DNA. The polypeptide is Outer membrane protein assembly factor BamD (Neisseria meningitidis serogroup A / serotype 4A (strain DSM 15465 / Z2491)).